The primary structure comprises 312 residues: Protoheme IX farnesyltransferase (312 aa).

A run of 8 helical transmembrane segments spans residues 31-51 (VMSL…GSFH), 52-72 (PVLA…AGAL), 119-139 (ILVN…YVVI), 152-172 (IVIG…SVTG), 179-199 (ILLF…LALF), 225-245 (ILLY…LGYF), 247-267 (VIYG…AVRV), and 288-308 (ILYL…AAVL).

Belongs to the UbiA prenyltransferase family. Protoheme IX farnesyltransferase subfamily.

The protein localises to the cell inner membrane. The enzyme catalyses heme b + (2E,6E)-farnesyl diphosphate + H2O = Fe(II)-heme o + diphosphate. Its pathway is porphyrin-containing compound metabolism; heme O biosynthesis; heme O from protoheme: step 1/1. Converts heme B (protoheme IX) to heme O by substitution of the vinyl group on carbon 2 of heme B porphyrin ring with a hydroxyethyl farnesyl side group. The sequence is that of Protoheme IX farnesyltransferase from Rhodopseudomonas palustris (strain ATCC BAA-98 / CGA009).